The chain runs to 385 residues: m7GpppN-mRNA hydrolase (385 aa).

In terms of domain architecture, Nudix hydrolase spans 95–226; sequence MGVPTYGAII…KLGLAPNKFF (132 aa). Positions 129–150 match the Nudix box motif; the sequence is GKVNKEEAPHDCAAREVFEETG. Mn(2+) is bound by residues Glu-144 and Glu-148. A phosphoserine mark is found at Ser-246, Ser-247, Ser-249, Ser-276, and Ser-284. The interval 247–266 is disordered; that stretch reads SDSDNGFSSTGSTPAKPTVE. Residues 249–259 show a composition bias toward low complexity; the sequence is SDNGFSSTGST.

Belongs to the Nudix hydrolase family. DCP2 subfamily. In terms of assembly, found in a mRNA decay complex with LSM1, LSM3, LSM4, EXOSC2, EXOSC4, EXOSC10, PARN, XRN1, CNOT6, UPF1, UPF2 and UPF3B. Forms a complex with DCP1A, EDC3, DDX6 and EDC4/HEDLS, within this complex directly interacts with EDC4/HEDLS. Interacts with DPC1B, UPF1, UPF2 and UPF3B. Associates with polysomes. Interacts (via N-terminus and C-terminus) with TRIM21 (via N-terminus and C-terminus). Interacts with LIMD1, WTIP and AJUBA. Interacts with DDX17 in an RNA-dependent manner. Interacts with ZC3HAV1. Interacts with APOBEC3G in an RNA-dependent manner. Interacts with ZFP36L1 (via N-terminus). Interacts with NBDY. Mn(2+) is required as a cofactor. Mg(2+) serves as cofactor.

The protein localises to the cytoplasm. The protein resides in the P-body. Its subcellular location is the nucleus. The catalysed reaction is a 5'-end (N(7)-methyl 5'-triphosphoguanosine)-ribonucleoside in mRNA + H2O = N(7)-methyl-GDP + a 5'-end phospho-ribonucleoside in mRNA + 2 H(+). Functionally, decapping metalloenzyme that catalyzes the cleavage of the cap structure on mRNAs. Removes the 7-methyl guanine cap structure from mRNA molecules, yielding a 5'-phosphorylated mRNA fragment and 7m-GDP. Necessary for the degradation of mRNAs, both in normal mRNA turnover and in nonsense-mediated mRNA decay. Plays a role in replication-dependent histone mRNA degradation. Has higher activity towards mRNAs that lack a poly(A) tail. Has no activity towards a cap structure lacking an RNA moiety. The presence of a N(6)-methyladenosine methylation at the second transcribed position of mRNAs (N(6),2'-O-dimethyladenosine cap; m6A(m)) provides resistance to DCP2-mediated decapping. Blocks autophagy in nutrient-rich conditions by repressing the expression of ATG-related genes through degradation of their transcripts. The sequence is that of m7GpppN-mRNA hydrolase (DCP2) from Pongo abelii (Sumatran orangutan).